A 561-amino-acid polypeptide reads, in one-letter code: Glutamate--tRNA ligase (561 aa).

Positions 107 to 117 (PNPSGPLHLGH) match the 'HIGH' region motif.

This sequence belongs to the class-I aminoacyl-tRNA synthetase family. Glutamate--tRNA ligase type 2 subfamily.

It localises to the cytoplasm. The catalysed reaction is tRNA(Glu) + L-glutamate + ATP = L-glutamyl-tRNA(Glu) + AMP + diphosphate. In terms of biological role, catalyzes the attachment of glutamate to tRNA(Glu) in a two-step reaction: glutamate is first activated by ATP to form Glu-AMP and then transferred to the acceptor end of tRNA(Glu). The sequence is that of Glutamate--tRNA ligase from Methanospirillum hungatei JF-1 (strain ATCC 27890 / DSM 864 / NBRC 100397 / JF-1).